The chain runs to 779 residues: Pleckstrin homology domain-containing family A member 4 (779 aa).

The PH domain maps to proline 54–arginine 153. Disordered regions lie at residues serine 152–proline 352, alanine 492–arginine 670, and methionine 691–aspartate 764. Serine 164 carries the post-translational modification Phosphoserine. The span at serine 184–glutamate 193 shows a compositional bias: basic and acidic residues. The segment covering glutamine 315–tyrosine 332 has biased composition (polar residues). Over residues proline 525–serine 535 the composition is skewed to low complexity. Residues proline 536–alanine 551 are compositionally biased toward basic and acidic residues. Serine 559 bears the Phosphoserine mark. The span at glutamine 594–glutamate 603 shows a compositional bias: basic and acidic residues. The segment covering leucine 647 to leucine 663 has biased composition (polar residues). A compositionally biased stretch (pro residues) spans proline 704–proline 724.

In terms of tissue distribution, highly expressed in melanoma. Detected at low levels in heart, skeletal muscle, kidney, liver and small intestine.

Its subcellular location is the cytoplasm. The protein localises to the membrane. Its function is as follows. Binds specifically to phosphatidylinositol 3-phosphate (PtdIns3P), but not to other phosphoinositides. In Homo sapiens (Human), this protein is Pleckstrin homology domain-containing family A member 4 (PLEKHA4).